A 230-amino-acid chain; its full sequence is Large ribosomal subunit protein uL1 (230 aa).

This sequence belongs to the universal ribosomal protein uL1 family. As to quaternary structure, part of the 50S ribosomal subunit.

Binds directly to 23S rRNA. The L1 stalk is quite mobile in the ribosome, and is involved in E site tRNA release. In terms of biological role, protein L1 is also a translational repressor protein, it controls the translation of the L11 operon by binding to its mRNA. The chain is Large ribosomal subunit protein uL1 from Leptospira biflexa serovar Patoc (strain Patoc 1 / Ames).